A 185-amino-acid polypeptide reads, in one-letter code: Protein GrpE (185 aa).

Residues 1-37 (MEEQEEKQYNQNIQDNEEGTQMREELQESTSAQQTLQ) form a disordered region. The span at 28 to 37 (ESTSAQQTLQ) shows a compositional bias: polar residues.

Belongs to the GrpE family. In terms of assembly, homodimer.

The protein localises to the cytoplasm. In terms of biological role, participates actively in the response to hyperosmotic and heat shock by preventing the aggregation of stress-denatured proteins, in association with DnaK and GrpE. It is the nucleotide exchange factor for DnaK and may function as a thermosensor. Unfolded proteins bind initially to DnaJ; upon interaction with the DnaJ-bound protein, DnaK hydrolyzes its bound ATP, resulting in the formation of a stable complex. GrpE releases ADP from DnaK; ATP binding to DnaK triggers the release of the substrate protein, thus completing the reaction cycle. Several rounds of ATP-dependent interactions between DnaJ, DnaK and GrpE are required for fully efficient folding. The polypeptide is Protein GrpE (Helicobacter hepaticus (strain ATCC 51449 / 3B1)).